The primary structure comprises 297 residues: Large ribosomal subunit protein uL18 (297 aa).

A compositionally biased stretch (basic residues) spans 258-267; the sequence is KKAHPKKRWT. Residues 258–277 are disordered; the sequence is KKAHPKKRWTEKKLTREQRQ. A compositionally biased stretch (basic and acidic residues) spans 268–277; the sequence is EKKLTREQRQ.

This sequence belongs to the universal ribosomal protein uL18 family. In terms of assembly, component of the large ribosomal subunit (LSU).

It is found in the cytoplasm. It localises to the nucleus. Functionally, component of the ribosome, a large ribonucleoprotein complex responsible for the synthesis of proteins in the cell. The small ribosomal subunit (SSU) binds messenger RNAs (mRNAs) and translates the encoded message by selecting cognate aminoacyl-transfer RNA (tRNA) molecules. The large subunit (LSU) contains the ribosomal catalytic site termed the peptidyl transferase center (PTC), which catalyzes the formation of peptide bonds, thereby polymerizing the amino acids delivered by tRNAs into a polypeptide chain. The nascent polypeptides leave the ribosome through a tunnel in the LSU and interact with protein factors that function in enzymatic processing, targeting, and the membrane insertion of nascent chains at the exit of the ribosomal tunnel. The polypeptide is Large ribosomal subunit protein uL18 (RPL5A) (Helianthus annuus (Common sunflower)).